The chain runs to 515 residues: Histidine ammonia-lyase (515 aa).

Positions 142–144 (ASG) form a cross-link, 5-imidazolinone (Ala-Gly). S143 is subject to 2,3-didehydroalanine (Ser).

The protein belongs to the PAL/histidase family. Contains an active site 4-methylidene-imidazol-5-one (MIO), which is formed autocatalytically by cyclization and dehydration of residues Ala-Ser-Gly.

It is found in the cytoplasm. The enzyme catalyses L-histidine = trans-urocanate + NH4(+). It participates in amino-acid degradation; L-histidine degradation into L-glutamate; N-formimidoyl-L-glutamate from L-histidine: step 1/3. In Bradyrhizobium sp. (strain ORS 278), this protein is Histidine ammonia-lyase.